Reading from the N-terminus, the 205-residue chain is Meiotic nuclear division protein 1 homolog (205 aa).

Ser-2 is subject to N-acetylserine. Positions His-84–Ile-173 form a coiled coil.

It belongs to the MND1 family. Heterodimer with PSMC3IP/HOP2. MND1-PSMC3IP interacts with DMC1 and RAD51 and binds preferentially to dsDNA.

It localises to the nucleus. In terms of biological role, required for proper homologous chromosome pairing and efficient cross-over and intragenic recombination during meiosis. Stimulates both DMC1- and RAD51-mediated homologous strand assimilation, which is required for the resolution of meiotic double-strand breaks. The protein is Meiotic nuclear division protein 1 homolog of Homo sapiens (Human).